The primary structure comprises 392 residues: Putative F-box protein At1g71320 (392 aa).

An F-box domain is found at 8–55 (NPKTIFIPDDIAEGIFHHLPIKSLARFKVLSKKWTSMIESTYFSHKRL).

This Arabidopsis thaliana (Mouse-ear cress) protein is Putative F-box protein At1g71320.